Consider the following 1610-residue polypeptide: MMMMMMKKMQHQRQQQEDHANEANYARGTRPPISGEGPTSQPNSSKQTVLSWQAAIDAARQAKAAQTMSTSAPPPVGSLSQRKRQQYAKSKKQGNSSNSRPARALFCLSLNNPIRRACISIVEWKPFDIFILLAIFANCVALAIYIPFPEDDSNSTNHNLEKVEYAFLIIFTVETFLKIIAYGLLLHPNAYVRNGWNLLDFVIVIVGLFSVILEQLTKETEGGNHSSGKSGGFDVKALRAFRVLRPLRLVSGVPSLQVVLNSIIKAMVPLLHIALLVLFVIIIYAIIGLELFIGKMHKTCFFADSDIVAEEDPAPCAFSGNGRQCAVNGTECRSGWVGPNGGITNFDNFAFAMLTVFQCITMEGWTDVLYWMNDAMGFELPWVYFVSLVIFGSFFVLNLVLGVLSGEFSKEREKAKARGDFQKLRENEQLEEDLKGYLDWITQAEDIDPENEEEGGEEGKRNTSMPTSETESVNTENVSGEGETQGSCGSLCQAISKSKLSRRWRRWNRFNRRRCRAAVKSVTFYWLVIVLVFLNTLTISSEHYNQPDWLTQIQDIANKVLLALFTCEMLVKMYSLGLQAYFVSLFNRFDCFVVCGGITETILVELELMSPLGVSVFRCVRLLRIFKVTRHWTSLSNLVASLLNSMKSIASLLLLLFLFIIIFSLLGMQLFGGKFNFDETQTKRSTFDNFPQALLTVFQILTGEDWNAVMYDGIMAYGGPSSSGMIVCIYFIILFICGNYILLNVFLAIAVDNLADAESLNTAQKEEAEEKERKKIARKESLENKKNNKPEVNQIANSDNKVTIDDYQEETEDKDPYPPCDVPVGEEEEEEEEEPEVPAGPRPRRISELNMKEKIVPIPEGSAFFILSKTNPIRVGCHKLINHHIFTNLILVFIMLSSAALAAEDPIRSHSFRNTILGYFDYAFTAIFTVEILLKMTTFGAFLHKGAFCRNYFNLLDMLVVGVSLVSFGIQSSAISVVKILRVLRVLRPLRAINRAKGLKHVVQCVFVAIRTIGNIMIVTTLLQFMFACIGVQLFKGKFYRCTDEAKSNPEECRGLFILYKDGDVDSPVVRERIWQNSDFNFDNVLSAMMALFTVSTFEGWPALLYKAIDSNGENAGPVYNHRVEISIFFIIYIIIVAFFMMNIFVGFVIVTFQEQGEKEYKNCELDKNQRQCVEYALKARPLRRYIPKNPYQYKFWYVVNSSPFEYMMFVLIMLNTLCLAMQHYEQSKMFNDAMDILNMVFTGVFTVEMVLKVIAFKPKGYFSDAWNTFDSLIVIGSIIDVALSEADPTESESLPLPTATPGNSEESNRISITFFRLFRVMRLVKLLSRGEGIRTLLWTFIKSFQALPYVALLIAMLFFIYAVIGMQMFGKVAMRDNNQINRNNNFQTFPQAVLLLFRCATGEAWQEIMLACLPGKLCDPDSDYNPGEEYTCGSNFAIVYFISFYMLCAFLIINLFVAVIMDNFDYLTRDWSILGPHHLDEFKRIWSEYDPEAKGRIKHLDVVTLLRRIQPPLGFGKLCPHRVACKRLVAMNMPLNSDGTVMFNATLFALVRTALKIKTEGNLEQANEELRAVIKKIWKKTSMKLLDQVVPPAGGQCGLCFLSPSRSRS.

Residues 1 to 99 (MMMMMMKKMQ…SKKQGNSSNS (99 aa)) form a disordered region. Over 1 to 125 (MMMMMMKKMQ…RACISIVEWK (125 aa)) the chain is Cytoplasmic. Positions 37–51 (GPTSQPNSSKQTVLS) are enriched in polar residues. Residues 53–66 (QAAIDAARQAKAAQ) show a composition bias toward low complexity. Residues 81-92 (QRKRQQYAKSKK) show a composition bias toward basic residues. One copy of the I repeat lies at 112-408 (NPIRRACISI…LVLGVLSGEF (297 aa)). The helical transmembrane segment at 126-144 (PFDIFILLAIFANCVALAI) threads the bilayer. The Extracellular segment spans residues 145 to 162 (YIPFPEDDSNSTNHNLEK). N-linked (GlcNAc...) asparagine glycosylation is present at asparagine 154. A helical transmembrane segment spans residues 163 to 182 (VEYAFLIIFTVETFLKIIAY). At 183-194 (GLLLHPNAYVRN) the chain is on the cytoplasmic side. A helical transmembrane segment spans residues 195-213 (GWNLLDFVIVIVGLFSVIL). The Extracellular portion of the chain corresponds to 214–234 (EQLTKETEGGNHSSGKSGGFD). N-linked (GlcNAc...) asparagine glycosylation is present at asparagine 224. A helical transmembrane segment spans residues 235–253 (VKALRAFRVLRPLRLVSGV). The Cytoplasmic portion of the chain corresponds to 254 to 272 (PSLQVVLNSIIKAMVPLLH). Residues 273-292 (IALLVLFVIIIYAIIGLELF) traverse the membrane as a helical segment. The Extracellular portion of the chain corresponds to 293–380 (IGKMHKTCFF…WMNDAMGFEL (88 aa)). Residue asparagine 328 is glycosylated (N-linked (GlcNAc...) asparagine). Glutamate 363 provides a ligand contact to Ca(2+). The chain crosses the membrane as a helical span at residues 381 to 405 (PWVYFVSLVIFGSFFVLNLVLGVLS). Over 406–522 (GEFSKEREKA…RRCRAAVKSV (117 aa)) the chain is Cytoplasmic. The tract at residues 428-445 (EQLEEDLKGYLDWITQAE) is binding to the beta subunit. The tract at residues 448-487 (DPENEEEGGEEGKRNTSMPTSETESVNTENVSGEGETQGS) is disordered. Polar residues predominate over residues 462-487 (NTSMPTSETESVNTENVSGEGETQGS). One copy of the II repeat lies at 508–754 (NRFNRRRCRA…VFLAIAVDNL (247 aa)). A helical membrane pass occupies residues 523-542 (TFYWLVIVLVFLNTLTISSE). Topologically, residues 543–557 (HYNQPDWLTQIQDIA) are extracellular. A helical transmembrane segment spans residues 558–576 (NKVLLALFTCEMLVKMYSL). Topologically, residues 577–584 (GLQAYFVS) are cytoplasmic. A helical transmembrane segment spans residues 585–603 (LFNRFDCFVVCGGITETIL). The Extracellular segment spans residues 604-613 (VELELMSPLG). Residues 614-632 (VSVFRCVRLLRIFKVTRHW) form a helical membrane-spanning segment. Residues 633–651 (TSLSNLVASLLNSMKSIAS) lie on the Cytoplasmic side of the membrane. Residues 652–672 (LLLLLFLFIIIFSLLGMQLFG) form a helical membrane-spanning segment. Over 673 to 726 (GKFNFDETQTKRSTFDNFPQALLTVFQILTGEDWNAVMYDGIMAYGGPSSSGMI) the chain is Extracellular. Glutamate 704 contributes to the Ca(2+) binding site. A helical membrane pass occupies residues 727–751 (VCIYFIILFICGNYILLNVFLAIAV). Topologically, residues 752–884 (DNLADAESLN…VGCHKLINHH (133 aa)) are cytoplasmic. Basic and acidic residues predominate over residues 765-789 (KEEAEEKERKKIARKESLENKKNNK). Residues 765–846 (KEEAEEKERK…VPAGPRPRRI (82 aa)) are disordered. The segment covering 790-801 (PEVNQIANSDNK) has biased composition (polar residues). Positions 824–836 (VGEEEEEEEEEPE) are enriched in acidic residues. Residues 871-1153 (NPIRVGCHKL…IFVGFVIVTF (283 aa)) form an III repeat. The helical transmembrane segment at 885 to 903 (IFTNLILVFIMLSSAALAA) threads the bilayer. The Extracellular segment spans residues 904 to 919 (EDPIRSHSFRNTILGY). The helical transmembrane segment at 920 to 939 (FDYAFTAIFTVEILLKMTTF) threads the bilayer. At 940 to 951 (GAFLHKGAFCRN) the chain is on the cytoplasmic side. Residues 952 to 970 (YFNLLDMLVVGVSLVSFGI) form a helical membrane-spanning segment. Residues 971–976 (QSSAIS) lie on the Extracellular side of the membrane. Residues 977-996 (VVKILRVLRVLRPLRAINRA) form a helical membrane-spanning segment. The Cytoplasmic portion of the chain corresponds to 997–1015 (KGLKHVVQCVFVAIRTIGN). Residues 1016-1035 (IMIVTTLLQFMFACIGVQLF) traverse the membrane as a helical segment. The Extracellular segment spans residues 1036-1125 (KGKFYRCTDE…AGPVYNHRVE (90 aa)). The interval 1073 to 1163 (RIWQNSDFNF…QEQGEKEYKN (91 aa)) is dihydropyridine binding. Glutamate 1099 contacts Ca(2+). Residues 1126–1146 (ISIFFIIYIIIVAFFMMNIFV) traverse the membrane as a helical segment. At 1147–1203 (GFVIVTFQEQGEKEYKNCELDKNQRQCVEYALKARPLRRYIPKNPYQYKFWYVVNSS) the chain is on the cytoplasmic side. An IV repeat occupies 1190–1465 (NPYQYKFWYV…LFVAVIMDNF (276 aa)). The helical transmembrane segment at 1204 to 1222 (PFEYMMFVLIMLNTLCLAM) threads the bilayer. The Extracellular portion of the chain corresponds to 1223-1237 (QHYEQSKMFNDAMDI). Residues 1238–1257 (LNMVFTGVFTVEMVLKVIAF) form a helical membrane-spanning segment. The Cytoplasmic segment spans residues 1258-1264 (KPKGYFS). Residues 1265–1286 (DAWNTFDSLIVIGSIIDVALSE) form a helical membrane-spanning segment. At 1287-1311 (ADPTESESLPLPTATPGNSEESNRI) the chain is on the extracellular side. The helical transmembrane segment at 1312-1331 (SITFFRLFRVMRLVKLLSRG) threads the bilayer. The Cytoplasmic segment spans residues 1332–1350 (EGIRTLLWTFIKSFQALPY). Residues 1351-1370 (VALLIAMLFFIYAVIGMQMF) form a helical membrane-spanning segment. At 1371 to 1437 (GKVAMRDNNQ…GEEYTCGSNF (67 aa)) the chain is on the extracellular side. The dihydropyridine binding stretch occupies residues 1418 to 1484 (LCDPDSDYNP…LGPHHLDEFK (67 aa)). A phenylalkylamine binding region spans residues 1430–1473 (EYTCGSNFAIVYFISFYMLCAFLIINLFVAVIMDNFDYLTRDWS). A helical membrane pass occupies residues 1438–1462 (AIVYFISFYMLCAFLIINLFVAVIM). The Cytoplasmic portion of the chain corresponds to 1463–1610 (DNFDYLTRDW…CFLSPSRSRS (148 aa)).

It belongs to the calcium channel alpha-1 subunit (TC 1.A.1.11) family. CACNA1D subfamily. In terms of assembly, voltage-dependent calcium channels are multisubunit complexes, consisting of alpha-1, alpha-2, beta and delta subunits in a 1:1:1:1 ratio. The channel activity is directed by the pore-forming and voltage-sensitive alpha-1 subunit. In many cases, this subunit is sufficient to generate voltage-sensitive calcium channel activity. The auxiliary subunits beta and alpha-2/delta linked by a disulfide bridge regulate the channel activity. Interacts with RIMBP2. Interacts with CABP1 and CABP4, resulting in a near elimination of calcium-dependent inactivation of the channel. In terms of tissue distribution, expressed in brain, heart and skeletal muscle.

It is found in the membrane. It carries out the reaction Ca(2+)(in) = Ca(2+)(out). Functionally, voltage-sensitive calcium channels (VSCC) mediate the entry of calcium ions into excitable cells and are also involved in a variety of calcium-dependent processes, including muscle contraction, hormone or neurotransmitter release, gene expression, cell motility, cell division and cell death. The isoform alpha-1D gives rise to L-type calcium currents. Long-lasting (L-type) calcium channels belong to the 'high-voltage activated' (HVA) group. They are blocked by dihydropyridines (DHP), phenylalkylamines, and by benzothiazepines. This chain is Voltage-dependent L-type calcium channel subunit alpha-1D (CACNA1D), found in Mesocricetus auratus (Golden hamster).